The primary structure comprises 484 residues: UDP-glucose:undecaprenyl-phosphate glucose-1-phosphate transferase (484 aa).

5 helical membrane passes run 37-57 (MVVA…VPAA), 59-79 (YRVA…LFPL), 93-113 (VVLG…ALIV), 122-142 (GWVG…RTLL), and 299-319 (ILAV…AVGV).

The protein belongs to the bacterial sugar transferase family.

The protein resides in the cell inner membrane. The catalysed reaction is di-trans,octa-cis-undecaprenyl phosphate + UDP-alpha-D-glucose = alpha-D-glucosyl di-trans,octa-cis-undecaprenyl diphosphate + UMP. Its pathway is glycan biosynthesis; xanthan biosynthesis. Is the initiating enzyme for the synthesis of the exopolysaccharide xanthan. Catalyzes the transfer of the glucose-1-phosphate moiety from UDP-Glc onto the carrier lipid undecaprenyl phosphate (C55-P), forming a phosphoanhydride bond yielding to glucosyl-pyrophosphoryl-undecaprenol (Glc-PP-C55). The chain is UDP-glucose:undecaprenyl-phosphate glucose-1-phosphate transferase (gumD) from Xanthomonas campestris pv. campestris.